The following is an 89-amino-acid chain: Small ribosomal subunit protein bS20 (89 aa).

Disordered stretches follow at residues 1–25 (MANI…ASMK) and 69–89 (KNAA…IQAS). Basic residues predominate over residues 7 to 20 (AIKRAKTSEKRRAH).

It belongs to the bacterial ribosomal protein bS20 family.

In terms of biological role, binds directly to 16S ribosomal RNA. The sequence is that of Small ribosomal subunit protein bS20 from Geobacillus thermodenitrificans (strain NG80-2).